The primary structure comprises 358 residues: Adenosine deaminase (358 aa).

Zn(2+) contacts are provided by histidine 14 and histidine 16. Substrate is bound by residues histidine 16, aspartate 18, and glycine 183. Histidine 212 serves as a coordination point for Zn(2+). The active-site Proton donor is glutamate 215. Aspartate 294 is a binding site for Zn(2+). Aspartate 295 provides a ligand contact to substrate.

This sequence belongs to the metallo-dependent hydrolases superfamily. Adenosine and AMP deaminases family. Zn(2+) is required as a cofactor.

The protein resides in the cell membrane. It localises to the cell junction. It is found in the cytoplasmic vesicle lumen. The protein localises to the cytoplasm. Its subcellular location is the lysosome. It carries out the reaction adenosine + H2O + H(+) = inosine + NH4(+). The enzyme catalyses 2'-deoxyadenosine + H2O + H(+) = 2'-deoxyinosine + NH4(+). Functionally, catalyzes the hydrolytic deamination of adenosine and 2-deoxyadenosine. Plays an important role in purine metabolism and in adenosine homeostasis. Modulates signaling by extracellular adenosine, and so contributes indirectly to cellular signaling events. May act as a positive regulator of T-cell coactivation. This chain is Adenosine deaminase (ada), found in Xenopus laevis (African clawed frog).